A 595-amino-acid polypeptide reads, in one-letter code: Probable inactive glycosyltransferase 25 family member 3 (595 aa).

Residues 1–24 form the signal peptide; that stretch reads MRAAPAAPLLQLLLLLGPRPEAAG. Asn-75, Asn-153, Asn-237, and Asn-360 each carry an N-linked (GlcNAc...) asparagine glycan. Residues 576 to 595 are disordered; it reads RLDLAGGSGHSLRPHPRDEL. Positions 592-595 match the Prevents secretion from ER motif; it reads RDEL.

It belongs to the glycosyltransferase 25 family.

The protein localises to the endoplasmic reticulum lumen. Functionally, probable cell adhesion protein involved in leukocyte transmigration across the blood-brain barrier. Does not express any beta-galactosyltransferase activity in vitro. The protein is Probable inactive glycosyltransferase 25 family member 3 (CERCAM) of Bos taurus (Bovine).